We begin with the raw amino-acid sequence, 697 residues long: tRNA 5-methylaminomethyl-2-thiouridine biosynthesis bifunctional protein MnmC (697 aa).

A tRNA (mnm(5)s(2)U34)-methyltransferase region spans residues 1-272 (MPKPASMAMN…KREMLTAVMS (272 aa)). Residues 300–697 (IGAGVAGLLT…HKHKTRQAVI (398 aa)) form an FAD-dependent cmnm(5)s(2)U34 oxidoreductase region.

It in the N-terminal section; belongs to the methyltransferase superfamily. tRNA (mnm(5)s(2)U34)-methyltransferase family. The protein in the C-terminal section; belongs to the DAO family. FAD serves as cofactor.

The protein localises to the cytoplasm. The enzyme catalyses 5-aminomethyl-2-thiouridine(34) in tRNA + S-adenosyl-L-methionine = 5-methylaminomethyl-2-thiouridine(34) in tRNA + S-adenosyl-L-homocysteine + H(+). Functionally, catalyzes the last two steps in the biosynthesis of 5-methylaminomethyl-2-thiouridine (mnm(5)s(2)U) at the wobble position (U34) in tRNA. Catalyzes the FAD-dependent demodification of cmnm(5)s(2)U34 to nm(5)s(2)U34, followed by the transfer of a methyl group from S-adenosyl-L-methionine to nm(5)s(2)U34, to form mnm(5)s(2)U34. This is tRNA 5-methylaminomethyl-2-thiouridine biosynthesis bifunctional protein MnmC from Psychrobacter cryohalolentis (strain ATCC BAA-1226 / DSM 17306 / VKM B-2378 / K5).